A 158-amino-acid polypeptide reads, in one-letter code: Protein Smg homolog (158 aa).

It belongs to the Smg family.

This is Protein Smg homolog from Vibrio cholerae serotype O1 (strain ATCC 39315 / El Tor Inaba N16961).